The sequence spans 275 residues: Tryptophan synthase alpha chain (275 aa).

Active-site proton acceptor residues include Glu58 and Asp69.

Belongs to the TrpA family. As to quaternary structure, tetramer of two alpha and two beta chains. As to expression, ubiquitously expressed at low levels in seedlings, roots, hypocotyls, cotyledons, stems, leaves, inflorescences, flowers, siliques and seeds.

It localises to the cytoplasm. The enzyme catalyses (1S,2R)-1-C-(indol-3-yl)glycerol 3-phosphate + L-serine = D-glyceraldehyde 3-phosphate + L-tryptophan + H2O. It catalyses the reaction (1S,2R)-1-C-(indol-3-yl)glycerol 3-phosphate = indole + D-glyceraldehyde 3-phosphate. Its pathway is amino-acid biosynthesis; L-tryptophan biosynthesis; L-tryptophan from chorismate: step 5/5. Its function is as follows. The alpha subunit is responsible for the aldol cleavage of indoleglycerol phosphate to indole and glyceraldehyde 3-phosphate. Contributes to the tryptophan-independent indole biosynthesis, and possibly to auxin production. This chain is Tryptophan synthase alpha chain (TRPA1), found in Arabidopsis thaliana (Mouse-ear cress).